We begin with the raw amino-acid sequence, 49 residues long: Small ribosomal subunit protein uS14B (49 aa).

It belongs to the universal ribosomal protein uS14 family. Zinc-binding uS14 subfamily. As to quaternary structure, part of the 30S ribosomal subunit.

In terms of biological role, binds 16S rRNA, required for the assembly of 30S particles. This Natronomonas pharaonis (strain ATCC 35678 / DSM 2160 / CIP 103997 / JCM 8858 / NBRC 14720 / NCIMB 2260 / Gabara) (Halobacterium pharaonis) protein is Small ribosomal subunit protein uS14B.